Reading from the N-terminus, the 865-residue chain is Protein translocase subunit SecA (865 aa).

ATP is bound by residues Gln-93, 111–115 (GEGKT), and Asp-501. Residues Cys-841, Cys-843, Cys-852, and Cys-853 each coordinate Zn(2+).

This sequence belongs to the SecA family. In terms of assembly, monomer and homodimer. Part of the essential Sec protein translocation apparatus which comprises SecA, SecYEG and auxiliary proteins SecDF-YajC and YidC. Requires Zn(2+) as cofactor.

It localises to the cell inner membrane. The protein resides in the cytoplasm. It carries out the reaction ATP + H2O + cellular proteinSide 1 = ADP + phosphate + cellular proteinSide 2.. In terms of biological role, part of the Sec protein translocase complex. Interacts with the SecYEG preprotein conducting channel. Has a central role in coupling the hydrolysis of ATP to the transfer of proteins into and across the cell membrane, serving as an ATP-driven molecular motor driving the stepwise translocation of polypeptide chains across the membrane. This chain is Protein translocase subunit SecA, found in Helicobacter acinonychis (strain Sheeba).